A 524-amino-acid polypeptide reads, in one-letter code: General transcription factor IIF subunit 1 (524 aa).

2 disordered regions span residues 56 to 76 and 181 to 462; these read MYQEEEMPESGAGSEYNRKQR and RLKD…IQLT. Positions 242–257 are enriched in basic residues; the sequence is KPQKKVPAKGGKKKKR. A compositionally biased stretch (acidic residues) spans 262–289; that stretch reads EALEDSDDGDFEGQEVDYMSDESSSDEE. The span at 290–307 shows a compositional bias: basic and acidic residues; that stretch reads LPGKIKPAKEEEGPKGLD. Acidic residues-rich tracts occupy residues 308-327 and 347-358; these read EQSESSEESEEEKAEEEEGE and SDESETSEDSDI. Over residues 368–378 the composition is skewed to basic residues; sequence QKKKTPPKKDK. A compositionally biased stretch (low complexity) spans 381–397; that stretch reads GSNSSSRGNSRPGTPSP. The segment covering 436–459 has biased composition (polar residues); sequence PQNTSGKSTPQPQSGKSTPSSGDI.

This sequence belongs to the TFIIF alpha subunit family. As to quaternary structure, heterodimer of an alpha and a beta subunit. Post-translationally, phosphorylated on Ser and other residues by TAF1 and casein kinase II-like kinases.

The protein resides in the nucleus. In terms of biological role, TFIIF is a general transcription initiation factor that binds to RNA polymerase II and helps to recruit it to the initiation complex in collaboration with TFIIB. It promotes transcription elongation. This is General transcription factor IIF subunit 1 (gtf2f1) from Xenopus laevis (African clawed frog).